The sequence spans 338 residues: MAKRNAVVVTHTRLRQTGTVVAEAVSQLRVAGFEVTIIDNTEAPDFGVQPPCVSDDTEIVVVLGGDGTILRAAELVHCTQVPILGVNMGHVGFLAEFESFQIDEAIRRVATHDYSIDERMIAHVDVWLPGATKPIEDWALNDITLERADRGKMVELSIRVDDVEMNSFGADGVIVSTPTGSTAYAFSAGGPVMWPNVKALQLIPLAAHALFARPLIIGSGSTFTIDILDDSMSEGWICCDGRRQRALPQGTRVMVRESRDTLRLARLSGMPFTNRLVSKFDLPVVGWREHARNEASSQPLHHGHTFPAAAYAAGVAGDAGVAGTEPDKPGERDGKAGA.

Asp66 (proton acceptor) is an active-site residue. Residues 66 to 67 (DG), Arg71, 141 to 142 (ND), Lys152, Asp171, 182 to 187 (TAYAFS), and Ala206 each bind NAD(+). A disordered region spans residues 317 to 338 (GDAGVAGTEPDKPGERDGKAGA). Residues 325–338 (EPDKPGERDGKAGA) show a composition bias toward basic and acidic residues.

It belongs to the NAD kinase family. It depends on a divalent metal cation as a cofactor.

It is found in the cytoplasm. The catalysed reaction is NAD(+) + ATP = ADP + NADP(+) + H(+). In terms of biological role, involved in the regulation of the intracellular balance of NAD and NADP, and is a key enzyme in the biosynthesis of NADP. Catalyzes specifically the phosphorylation on 2'-hydroxyl of the adenosine moiety of NAD to yield NADP. This Bifidobacterium longum subsp. infantis (strain ATCC 15697 / DSM 20088 / JCM 1222 / NCTC 11817 / S12) protein is NAD kinase.